A 1204-amino-acid chain; its full sequence is ATP-dependent helicase/nuclease subunit A (1204 aa).

Residues 2 to 469 (TNFTKEQDQA…IILADNFRST (468 aa)) form the UvrD-like helicase ATP-binding domain. 23 to 30 (ASAGSGKT) lines the ATP pocket. The UvrD-like helicase C-terminal domain maps to 497–784 (GQLQFGASYY…KLMTIHASKG (288 aa)).

Belongs to the helicase family. AddA subfamily. Heterodimer of AddA and AddB/RexB. Requires Mg(2+) as cofactor.

It catalyses the reaction Couples ATP hydrolysis with the unwinding of duplex DNA by translocating in the 3'-5' direction.. The catalysed reaction is ATP + H2O = ADP + phosphate + H(+). In terms of biological role, the heterodimer acts as both an ATP-dependent DNA helicase and an ATP-dependent, dual-direction single-stranded exonuclease. Recognizes the chi site generating a DNA molecule suitable for the initiation of homologous recombination. The AddA nuclease domain is required for chi fragment generation; this subunit has the helicase and 3' -&gt; 5' nuclease activities. This chain is ATP-dependent helicase/nuclease subunit A, found in Lactobacillus gasseri (strain ATCC 33323 / DSM 20243 / BCRC 14619 / CIP 102991 / JCM 1131 / KCTC 3163 / NCIMB 11718 / NCTC 13722 / AM63).